The following is a 446-amino-acid chain: Anthranilate N-benzoyltransferase protein 2 (446 aa).

Catalysis depends on proton acceptor residues His164 and Asp393.

The protein belongs to the plant acyltransferase family. Post-translationally, N-terminus is blocked.

It carries out the reaction anthranilate + benzoyl-CoA = N-benzoylanthranilate + CoA. It functions in the pathway phytoalexin biosynthesis; methoxydianthramide B biosynthesis. In terms of biological role, catalyzes the formation of N-benzoylanthranilate, in the course of methoxydianthramide B, a phytoalexin. Phytoalexins are produced in response to infection by parasites, and are essential for the expression of disease resistance. The chain is Anthranilate N-benzoyltransferase protein 2 (HCBT2) from Dianthus caryophyllus (Carnation).